Consider the following 1710-residue polypeptide: MKKIFSKKGESPLGSFARRQRSSAGGGGEPGEGAYSQPGYHVRDRDLGKIHKAASAGNVAKVQQILLLRKNGLNDRDKMNRTALHLACANGHPEVVTLLVDRKCQLNVCDNENRTALMKAVQCQEEKCATILLEHGADPNLADVHGNTALHYAVYNEDISVATKLLLYDANIEAKNKDDLTPLLLAVSGKKQQMVEFLIKKKANVNAVDKLESSHQLISEYKEERIPKHSSQNSNSVDESSEDSLSRLSGKPGVDDSWPTSDDEDLNFDTKNVPKPSLAKLMTASQQSRKNLEATYGTVRTGNRTLFEDRDSDSQDEVVVESLPTTSIKVQCFSHPTYQSPDLLPKPSHKSLANPGLMKEEPTKPGIAKKENGIDIIESAPLEQTNNDNLTYVDEVHKNNRSDMMSALGLGQEEDIESPWDSESISENFPQKYVDPLAGAADGKEKNIGNEQAEDVFYIPSCMSGSRNFKMAKLEDTRNVGMPVAHMESPERYLHLKPTIEMKDSVPNKAGGMKDVQTSKAAEHDLEVASEEEQEREGSENNQPQVEEERKKHRNNEMEVSANIHDGATDDAEDDDDDDGLIQKRKSGETDHQQFPRKENKEYASSGPALQMKEVKSTEKEKRTSKESVNSPVFGKASLLTGGLLQVDDDSSLSEIDEDEGRPTKKTSNEKNKVKNQIQSMDDVDDLTQSSETASEDCELPHSSYKNFMLLIEQLGMECKDSVSLLKIQDAALSCERLLELKKNHCELLTVKIKKMEDKVNVLQRELSETKEIKSQLEHQKVEWERELCSLRFSLNQEEEKRRNADTLYEKIREQLRRKEEQYRKEVEVKQQLELSLQTLEMELRTVKSNLNQVVQERNDAQRQLSREQNARMLQDGILTNHLSKQKEIEMAQKKMNSENSHSHEEEKDLSHKNSMLQEEIAMLRLEIDTIKNQNQEKEKKCFEDLKIVKEKNEDLQKTIKQNEETLTQTISQYNGRLSVLTAENAMLNSKLENEKQSKERLEAEVESYHSRLAAAIHDRDQSETSKRELELAFQRARDECSRLQDKMNFDVSNLKDNNEILSQQLFKTESKLNSLEIEFHHTRDALREKTLGLERVQKDLSQTQCQMKEMEQKYQNEQVKVNKYIGKQESVEERLSQLQSENMLLRQQLDDAHNKADNKEKTVINIQDQFHAIVQKLQAESEKQSLLLEERNKELISECNHLKERQYQYENEKAEREVVVRQLQQELADTLKKQSMSEASLEVTSRYRINLEDETQDLKKKLGQIRNQLQEAQDRHTEAVRCAEKMQDHKQKLEKDNAKLKVTVKKQMDKIEELQKNLLNANLSEDEKEQLKKLMELKQSLECNLDQEMKKNVELEREITGFKNLLKMTRKKLNEYENGEFSFHGDLKTSQFEMDIQINKLKHKIDDLTAELETAGSKCLHLDTKNQILQEELLSMKTVQKKCEKLQKNKKKLEQEVINLRSHIERNMVELGQVKQYKQEIEERARQEIAEKLKEVNLFLQAQAASQENLEQFRENNFASMKSQMELRIKDLESELSKIKTSQEDFNKTELEKYKQLYLEELKVRKSLSSKLTKTNERLAEVNTKLLVEKQQSRSLFTTLTTRPVMEPPCVGNLNNSLDLNRKLIPRENLVISTSNPRASNNSMENYLSKMQQELEKNITRELKEAAAELESGSIASPLGSTDESNLNQDLVWKASREYVQVLKKNYMI.

Residues 1 to 41 (MKKIFSKKGESPLGSFARRQRSSAGGGGEPGEGAYSQPGYH) form a disordered region. 2 positions are modified to phosphoserine: serine 11 and serine 15. ANK repeat units follow at residues 45 to 75 (RDLG…GLND), 79 to 108 (MNRT…QLNV), 112 to 141 (ENRT…DPNL), 145 to 174 (HGNT…NIEA), and 178 to 207 (DDLT…NVNA). The disordered stretch occupies residues 222–274 (KEERIPKHSSQNSNSVDESSEDSLSRLSGKPGVDDSWPTSDDEDLNFDTKNVP). Phosphoserine is present on residues serine 241, serine 261, serine 489, and serine 530. The segment at 504–630 (DSVPNKAGGM…EKRTSKESVN (127 aa)) is disordered. Positions 529–566 (ASEEEQEREGSENNQPQVEEERKKHRNNEMEVSANIHD) form a coiled coil. Residues 569–580 (TDDAEDDDDDDG) are compositionally biased toward acidic residues. Basic and acidic residues-rich tracts occupy residues 586 to 602 (KSGE…ENKE) and 613 to 626 (KEVK…RTSK). Serine 631 is subject to Phosphoserine. Residues 650-660 (DSSLSEIDEDE) are compositionally biased toward acidic residues. Positions 650-698 (DSSLSEIDEDEGRPTKKTSNEKNKVKNQIQSMDDVDDLTQSSETASEDC) are disordered. A compositionally biased stretch (basic and acidic residues) spans 661–673 (GRPTKKTSNEKNK). Coiled-coil stretches lie at residues 743–873 (KNHC…NARM), 905–1472 (EEEK…MVEL), 1517–1587 (NNFA…NTKL), and 1649–1674 (LSKM…LESG). Residues 892–912 (AQKKMNSENSHSHEEEKDLSH) are disordered.

In terms of assembly, interacts with TRIO. Interacts with GPS2. Interacts with CCDC85B. Interacts with HMMR.

Its function is as follows. Acts as a regulator of adipogenesis. Involved in the regulation of the feeding behavior. The chain is Ankyrin repeat domain-containing protein 26 from Homo sapiens (Human).